The sequence spans 185 residues: Large ribosomal subunit protein uL5 (185 aa).

It belongs to the universal ribosomal protein uL5 family. Part of the 50S ribosomal subunit; part of the 5S rRNA/L5/L18/L25 subcomplex. Contacts the 5S rRNA and the P site tRNA. Forms a bridge to the 30S subunit in the 70S ribosome.

In terms of biological role, this is one of the proteins that bind and probably mediate the attachment of the 5S RNA into the large ribosomal subunit, where it forms part of the central protuberance. In the 70S ribosome it contacts protein S13 of the 30S subunit (bridge B1b), connecting the 2 subunits; this bridge is implicated in subunit movement. Contacts the P site tRNA; the 5S rRNA and some of its associated proteins might help stabilize positioning of ribosome-bound tRNAs. This Streptomyces avermitilis (strain ATCC 31267 / DSM 46492 / JCM 5070 / NBRC 14893 / NCIMB 12804 / NRRL 8165 / MA-4680) protein is Large ribosomal subunit protein uL5.